The following is a 304-amino-acid chain: UDP-3-O-acyl-N-acetylglucosamine deacetylase (304 aa).

Zn(2+) is bound by residues His78, His237, and Asp241. Catalysis depends on His264, which acts as the Proton donor.

It belongs to the LpxC family. Zn(2+) is required as a cofactor.

The catalysed reaction is a UDP-3-O-[(3R)-3-hydroxyacyl]-N-acetyl-alpha-D-glucosamine + H2O = a UDP-3-O-[(3R)-3-hydroxyacyl]-alpha-D-glucosamine + acetate. The protein operates within glycolipid biosynthesis; lipid IV(A) biosynthesis; lipid IV(A) from (3R)-3-hydroxytetradecanoyl-[acyl-carrier-protein] and UDP-N-acetyl-alpha-D-glucosamine: step 2/6. Its function is as follows. Catalyzes the hydrolysis of UDP-3-O-myristoyl-N-acetylglucosamine to form UDP-3-O-myristoylglucosamine and acetate, the committed step in lipid A biosynthesis. The polypeptide is UDP-3-O-acyl-N-acetylglucosamine deacetylase (Polynucleobacter necessarius subsp. necessarius (strain STIR1)).